Here is a 434-residue protein sequence, read N- to C-terminus: Protein maelstrom homolog (434 aa).

Residues 4–73 constitute a DNA-binding region (HMG box); that stretch reads RRGSRNAYYF…AQGKDAGPWE (70 aa). The tract at residues 357 to 387 is disordered; the sequence is SHFSSSNQEQRSNTPTGDYPSGVKISGQSSS. Over residues 363-372 the composition is skewed to polar residues; sequence NQEQRSNTPT.

It belongs to the maelstrom family. In terms of assembly, interacts with SMARCB1, SIN3B and DDX4. Interacts with piRNA-associated proteins TDRD1, PIWIL1 and PIWIL2. Interacts with TEX19.

It localises to the cytoplasm. The protein localises to the nucleus. In terms of biological role, plays a central role during spermatogenesis by repressing transposable elements and preventing their mobilization, which is essential for the germline integrity. Acts via the piRNA metabolic process, which mediates the repression of transposable elements during meiosis by forming complexes composed of piRNAs and Piwi proteins and governs the methylation and subsequent repression of transposons. Its association with piP-bodies suggests a participation in the secondary piRNAs metabolic process. Required for the localization of germ-cell factors to the meiotic nuage. The sequence is that of Protein maelstrom homolog (MAEL) from Sus scrofa (Pig).